Reading from the N-terminus, the 178-residue chain is MRVLGVDPGLTRCGLGVVDGGPGRRASLVEVGVVRTPASDEVADRLRAVSEGVDEWLDRVRPDAVAVEKVFSQANVRTVMGTAQAGAVAIVAAARRGLPIGLYTPSEVKAAVTGSGRADKAQVGFMVTKLLDLPEAPRPADAADALALALCHLWRGPALARMRAATPARSPGVPGGRR.

Active-site residues include D7, E68, and D141. Mg(2+) is bound by residues D7, E68, and D141.

It belongs to the RuvC family. As to quaternary structure, homodimer which binds Holliday junction (HJ) DNA. The HJ becomes 2-fold symmetrical on binding to RuvC with unstacked arms; it has a different conformation from HJ DNA in complex with RuvA. In the full resolvosome a probable DNA-RuvA(4)-RuvB(12)-RuvC(2) complex forms which resolves the HJ. It depends on Mg(2+) as a cofactor.

It localises to the cytoplasm. It carries out the reaction Endonucleolytic cleavage at a junction such as a reciprocal single-stranded crossover between two homologous DNA duplexes (Holliday junction).. The RuvA-RuvB-RuvC complex processes Holliday junction (HJ) DNA during genetic recombination and DNA repair. Endonuclease that resolves HJ intermediates. Cleaves cruciform DNA by making single-stranded nicks across the HJ at symmetrical positions within the homologous arms, yielding a 5'-phosphate and a 3'-hydroxyl group; requires a central core of homology in the junction. The consensus cleavage sequence is 5'-(A/T)TT(C/G)-3'. Cleavage occurs on the 3'-side of the TT dinucleotide at the point of strand exchange. HJ branch migration catalyzed by RuvA-RuvB allows RuvC to scan DNA until it finds its consensus sequence, where it cleaves and resolves the cruciform DNA. The sequence is that of Crossover junction endodeoxyribonuclease RuvC from Parafrankia sp. (strain EAN1pec).